The sequence spans 584 residues: MDVKRPKKIFTRSQIIDLIADGKVIVIYKNNVLNLTSWIKKHPGGDKAAYHMVGKDATDEMHAYHCDETVDTFTRFKIGEIEGPRWENLLPPIQGGIYAKGGHYGSLNNKNTSNKKTLDSKLDNDSSNSTSDLECLTTTNSCDSDISETEIANYKGIGFVPSVKPVVPQNQLVSKSNMDIVFPIIDEETKKKVIRNPKTLLNNYDNKLSQEDVMSLPALDYDSQQVLRDKYNELHQTIIDYGLYECDLWDYVREVTKIGSLFLYSLSFLKINQLFLSAVFMGMAWHQGTFIAHDAGHIGITHNYQIDNIFGMLIADWFGGLSLGWWKRNHNVHHLITNDPVHDPDIQHLPFFAVSVRLFQNVYSTYYDKILPFDKFSQFLIPLQKYLYYPILCFGRFNLYRLSWTHVLCGQGPRQGKAAWFRYFEFFGLSFFFYWFFYLLVFKTIEGGWNRFNYVMVSHITTMLVHVQITLSHFAMSTADLGVSESFPSRQVRTTMDVDCPEWLDFLHGGLQFQAIHHLFPRLPRHNLRKAQPFVIKFCEEVGLSYSIYGFGEGNEIVISRLADIGKQCSIFLDATKHYEGDLY.

In terms of domain architecture, Cytochrome b5 heme-binding spans 7–82; sequence KKIFTRSQII…FTRFKIGEIE (76 aa). 2 residues coordinate heme: H42 and H65. Residues 109-134 form a disordered region; sequence NKNTSNKKTLDSKLDNDSSNSTSDLE. A helical membrane pass occupies residues 261 to 281; sequence LFLYSLSFLKINQLFLSAVFM. A Histidine box-1 motif is present at residues 293–297; it reads HDAGH. The helical transmembrane segment at 306–326 threads the bilayer; that stretch reads IDNIFGMLIADWFGGLSLGWW. The Histidine box-2 motif lies at 330 to 334; that stretch reads HNVHH. 3 helical membrane-spanning segments follow: residues 386–403, 423–443, and 455–475; these read YLYYPILCFGRFNLYRLS, YFEFFGLSFFFYWFFYLLVFK, and VMVSHITTMLVHVQITLSHFA. The short motif at 514 to 518 is the Histidine box-3 element; that stretch reads QAIHH.

The protein belongs to the fatty acid desaturase type 1 family.

It localises to the membrane. The enzyme catalyses an N-acylsphing-4-enine + 2 Fe(II)-[cytochrome b5] + O2 + 2 H(+) = a (4E,8E)-4-sphinga-4,8-dienine ceramide + 2 Fe(III)-[cytochrome b5] + 2 H2O. Its pathway is lipid metabolism; sphingolipid metabolism. Its function is as follows. Delta(8)-fatty-acid desaturase which introduces a double bond at the 8-position in the long-chain base (LCB) of ceramides. Required for the formation of the di-unsaturated sphingoid base (E,E)-sphinga-4,8-dienine during glucosylceramide (GluCer) biosynthesis. The protein is Delta 8-(E)-sphingolipid desaturase of Candida albicans (strain SC5314 / ATCC MYA-2876) (Yeast).